A 75-amino-acid polypeptide reads, in one-letter code: UPF0181 protein ETA_15280 (75 aa).

The protein belongs to the UPF0181 family.

The polypeptide is UPF0181 protein ETA_15280 (Erwinia tasmaniensis (strain DSM 17950 / CFBP 7177 / CIP 109463 / NCPPB 4357 / Et1/99)).